Here is a 150-residue protein sequence, read N- to C-terminus: UPF0178 protein AZOSEA36080 (150 aa).

The protein belongs to the UPF0178 family.

The chain is UPF0178 protein AZOSEA36080 from Aromatoleum aromaticum (strain DSM 19018 / LMG 30748 / EbN1) (Azoarcus sp. (strain EbN1)).